The following is a 148-amino-acid chain: Large ribosomal subunit protein uL16 (148 aa).

It belongs to the universal ribosomal protein uL16 family. In terms of assembly, part of the 50S ribosomal subunit.

Binds 23S rRNA and is also seen to make contacts with the A and possibly P site tRNAs. The polypeptide is Large ribosomal subunit protein uL16 (Gloeobacter violaceus (strain ATCC 29082 / PCC 7421)).